Reading from the N-terminus, the 285-residue chain is RNA polymerase sigma factor RpoH (285 aa).

The segment at 53 to 122 (LILSHLRFVA…IHEYVLRNWR (70 aa)) is sigma-70 factor domain-2. The Interaction with polymerase core subunit RpoC signature appears at 77–80 (DLIQ). The interval 229–281 (ALEGLDERSQHIIRARWLDDDNKSTLQELADQYGVSAERVRQLEKNAMKKLKM) is sigma-70 factor domain-4. Residues 254-273 (LQELADQYGVSAERVRQLEK) constitute a DNA-binding region (H-T-H motif).

Belongs to the sigma-70 factor family. RpoH subfamily. Interacts with the RNA polymerase core enzyme.

It localises to the cytoplasm. Sigma factors are initiation factors that promote the attachment of RNA polymerase to specific initiation sites and are then released. This sigma factor is involved in regulation of expression of heat shock genes. This is RNA polymerase sigma factor RpoH from Serratia marcescens.